The chain runs to 283 residues: tRNA pseudouridine synthase A (283 aa).

The active-site Nucleophile is the Asp-73. The interval 120–124 is RNA binding; the sequence is FHARF. Tyr-131 contacts substrate. The tract at residues 181 to 185 is interaction with tRNA; that stretch reads QCQSR.

This sequence belongs to the tRNA pseudouridine synthase TruA family. In terms of assembly, homodimer.

It carries out the reaction uridine(38/39/40) in tRNA = pseudouridine(38/39/40) in tRNA. Its function is as follows. Formation of pseudouridine at positions 38, 39 and 40 in the anticodon stem and loop of transfer RNAs. This is tRNA pseudouridine synthase A from Pectobacterium atrosepticum (strain SCRI 1043 / ATCC BAA-672) (Erwinia carotovora subsp. atroseptica).